The following is a 343-amino-acid chain: Inositol 2-dehydrogenase 1 (343 aa).

It belongs to the Gfo/Idh/MocA family. In terms of assembly, homotetramer.

The enzyme catalyses myo-inositol + NAD(+) = scyllo-inosose + NADH + H(+). Functionally, involved in the oxidation of myo-inositol (MI) to 2-keto-myo-inositol (2KMI or 2-inosose). This is Inositol 2-dehydrogenase 1 from Mycolicibacterium vanbaalenii (strain DSM 7251 / JCM 13017 / BCRC 16820 / KCTC 9966 / NRRL B-24157 / PYR-1) (Mycobacterium vanbaalenii).